Here is a 2000-residue protein sequence, read N- to C-terminus: E3 ubiquitin-protein ligase TTC3 (2000 aa).

Positions 20–249 (MDDFAEGGLS…RHSCMQCVKQ (230 aa)) are interaction with POLG. TPR repeat units lie at residues 250–283 (GELMKMRGNEEFAKEKFEIAVIYYTRAIEYRPEN) and 284–317 (HLLYGNRALCFLRMGQFRNALSDGKRAIVLKNTW). S397 is subject to Phosphoserine. Residues 442–478 (CDCHPEFLPPPSQPPRHKGKQKSRNNESEKPSSNSQV) form a disordered region. TPR repeat units lie at residues 556–592 (VLVVYGLAVSLLGIGRPEELSEAENQFKRIIEHYPNE) and 596–629 (CLAYCGIGKVYLKKNRFLEALNHFEKAKTLICRL). The tract at residues 804–828 (AQERMEEDLRESNPPKPEEPEETVE) is disordered. Phosphoserine is present on S1029. 5 disordered regions span residues 1041–1087 (NKGK…GPFA), 1233–1308 (FQPD…PEDA), 1423–1448 (QSSTADARTALSEPEGNSRHSGSSDS), 1806–1839 (LEVKKASQVSPSEQNPEADEKPSGQATRSSQSQK), and 1894–1947 (EEQK…VPAP). Positions 1059-1070 (GTASVTPSSETV) are enriched in polar residues. Phosphoserine is present on S1080. Residues 1268–1277 (DSDSSSGSAS) show a composition bias toward low complexity. Residues 1829–1839 (GQATRSSQSQK) are compositionally biased toward polar residues. Over residues 1894-1911 (EEQKKKKPNPGKDKKTSE) the composition is skewed to basic and acidic residues. The segment covering 1912 to 1934 (AHPAASVSKSSPSPPLAAAGPSA) has biased composition (low complexity). The segment at 1952–1991 (CQICHEIFKSKNMRVLKCGHKFHKGCFKQWLKGQSTCPTC) adopts an RING-type; atypical zinc-finger fold.

In terms of assembly, interacts (when phosphorylated on Ser-397) with AKT1, AKT2 and AKT3 (when phosphorylated). Interacts with CIT. Interacts with POLG. Interacts with HSP70. Interacts with SMURF2. Post-translationally, phosphorylation on Ser-397 by Akt is required for ubiquitin ligase activity. Proteolytically cleaved into differently sized N- and C-terminal fragments.

It localises to the nucleus. It is found in the cytoplasm. The protein localises to the golgi apparatus. It carries out the reaction S-ubiquitinyl-[E2 ubiquitin-conjugating enzyme]-L-cysteine + [acceptor protein]-L-lysine = [E2 ubiquitin-conjugating enzyme]-L-cysteine + N(6)-ubiquitinyl-[acceptor protein]-L-lysine.. The protein operates within protein modification; protein ubiquitination. In terms of biological role, E3 ubiquitin-protein ligase which catalyzes the formation of 'Lys-48'-polyubiquitin chains. Mediates the ubiquitination and subsequent degradation of phosphorylated Akt (AKT1, AKT2 and AKT3) in the nucleus. Acts as a terminal regulator of Akt signaling after activation; its phosphorylation by Akt, which is a prerequisite for ubiquitin ligase activity, suggests the existence of a regulation mechanism required to control Akt levels after activation. Positively regulates TGFB1-induced epithelial-mesenchymal transition and myofibroblast differentiation by mediating the ubiquitination and subsequent degradation of SMURF2. Regulates neuronal differentiation by regulating actin remodeling and Golgi organization via a signaling cascade involving RHOA, CIT and ROCK. Inhibits cell proliferation. This is E3 ubiquitin-protein ligase TTC3 from Rattus norvegicus (Rat).